A 220-amino-acid chain; its full sequence is VQ motif-containing protein 5 (220 aa).

A VQ motif is present at residues phenylalanine 49–threonine 57. Disordered regions lie at residues proline 61 to isoleucine 80 and histidine 131 to serine 171. Composition is skewed to polar residues over residues methionine 133–glycine 150 and serine 157–serine 171.

Its subcellular location is the nucleus. Its function is as follows. May function as negative regulator of plant defense. The polypeptide is VQ motif-containing protein 5 (Arabidopsis thaliana (Mouse-ear cress)).